We begin with the raw amino-acid sequence, 404 residues long: MSQTRYFFTSESVSEGHPDKVADQISDAVLDDFLRQDSSSRVACETFVTTGQVIVGGEVTTKGIVDIQTIARKVVTEIGYTKSEYMFEANSCGVLSALHSQSPDINRGVDRKEEIADEFDRVGAGDQGMMFGYACTETPVLMPAAIQFAQHLMKKLAEIRKEGKIMTYLRPDAKSQVTLEYENEVVKRVDAVVVSTQHDPEPEGVSEAAWQEVIKNDIIENVIKVVIPADLIDENTKFHINPTGRFVIGGPHGDTGLTGRKIIVDTYGGAAPHGGGAFSGKDPSKVDRSAAYAARHVAKNIVAAGLADKCTVQVSYAIGVARPVSIYINTHDTAKHGLNDAQIQEKAELIFDLRPAAIIKRFSLNKPEGWCYQQTAAYGHFGRDIFPWEKTEKVGELKSALNLA.

His-17 contributes to the ATP binding site. Asp-19 is a Mg(2+) binding site. Glu-45 serves as a coordination point for K(+). Residues Glu-58 and Gln-101 each coordinate L-methionine. Positions 101–111 are flexible loop; the sequence is QSPDINRGVDR. ATP contacts are provided by residues 172–174, 245–246, Asp-254, 260–261, Ala-277, and Lys-281; these read DAK, RF, and RK. Asp-254 serves as a coordination point for L-methionine. Lys-285 serves as a coordination point for L-methionine.

Belongs to the AdoMet synthase family. In terms of assembly, homotetramer; dimer of dimers. Mg(2+) is required as a cofactor. It depends on K(+) as a cofactor.

The protein localises to the cytoplasm. It carries out the reaction L-methionine + ATP + H2O = S-adenosyl-L-methionine + phosphate + diphosphate. The protein operates within amino-acid biosynthesis; S-adenosyl-L-methionine biosynthesis; S-adenosyl-L-methionine from L-methionine: step 1/1. Its function is as follows. Catalyzes the formation of S-adenosylmethionine (AdoMet) from methionine and ATP. The overall synthetic reaction is composed of two sequential steps, AdoMet formation and the subsequent tripolyphosphate hydrolysis which occurs prior to release of AdoMet from the enzyme. The protein is S-adenosylmethionine synthase of Pelodictyon phaeoclathratiforme (strain DSM 5477 / BU-1).